The following is a 499-amino-acid chain: Transcriptional regulator sdnM (499 aa).

The protein localises to the nucleus. It participates in antibiotic biosynthesis. Transcriptional regulator; part of the gene cluster that mediates the biosynthesis of sordarin and hypoxysordarin, glycoside antibiotics with a unique tetracyclic diterpene aglycone structure. First, the geranylgeranyl diphosphate synthase sdnC constructs GGDP from farnesyl diphosphate and isopentenyl diphosphate. The diterpene cyclase sdnA then catalyzes the cyclization of GGDP to afford cycloaraneosene. Cycloaraneosene is then hydroxylated four times by the putative cytochrome P450 monooxygenases sdnB, sdnE, sdnF and sdnH to give a hydroxylated cycloaraneosene derivative such as cycloaraneosene-8,9,13,19-tetraol. Although the order of the hydroxylations is unclear, at least C8, C9 and C13 of the cycloaraneosene skeleton are hydroxylated before the sordaricin formation. Dehydration of the 13-hydroxy group of the hydroxylated cycloaraneosene derivative might be catalyzed by an unassigned hypothetical protein such as sdnG and sdnP to construct the cyclopentadiene moiety. The FAD-dependent oxidoreductase sdnN is proposed to catalyze the oxidation at C9 of the hydroxylated cycloaraneosene derivative and also catalyze the Baeyer-Villiger oxidation to give the lactone intermediate. The presumed lactone intermediate would be hydrolyzed to give an acrolein moiety and a carboxylate moiety. Then, [4+2]cycloaddition would occur between the acrolein moiety and the cyclopentadiene moiety to give sordaricin. SdnN might also be involved in the [4+2]cycloaddition after the hypothesized oxidation to accommodate the oxidized product and prompt the [4+2]cycloaddition. GDP-6-deoxy-D-altrose may be biosynthesized from GDP-D-mannose by the putative GDP-mannose-4,6-dehydratase sdnI and the short-chain dehydrogenase sdnK. The glycosyltransferase sdnJ catalyzes the attachment of 6-deoxy-D-altrose onto the 19-hydroxy group of sordaricin to give 4'-O-demethylsordarin. The methyltransferase sdnD would complete the biosynthesis of sordarin. Sordarin can be further modified into hypoxysordarin. The unique acyl chain at the 3'-hydroxy group of hypoxysordarin would be constructed by an iterative type I PKS sdnO and the trans-acting polyketide methyltransferase sdnL. SdnL would be responsible for the introduction of an alpha-methyl group of the polyketide chain. Alternatively, the beta-lactamase-like protein sdnR might be responsible for the cleavage and transfer of the polyketide chain from the PKS sdnO to sordarin. Two putative cytochrome P450 monooxygenases, sdnQ and sdnT, might catalyze the epoxidations of the polyketide chain to complete the biosynthesis of hypoxysordarin. Transcriptional regulators sdnM and sdnS are presumably encoded for the transcriptional regulation of the expression of the sdn gene cluster. This chain is Transcriptional regulator sdnM, found in Sordaria araneosa (Pleurage araneosa).